The chain runs to 63 residues: MKASELRSKDAAELGQELESLLKAQFGLRMQKATQQLANTSQLRNVRRDIARVRTLLTEKAGK.

Belongs to the universal ribosomal protein uL29 family.

In Bordetella petrii (strain ATCC BAA-461 / DSM 12804 / CCUG 43448), this protein is Large ribosomal subunit protein uL29.